A 345-amino-acid chain; its full sequence is Trans-enoyl reductase tndF (345 aa).

Residues 1-26 (MAREHQAAILPQPGGPLSVGMRPTPK) are disordered. NADP(+) is bound by residues 44–49 (CDYYQR), 168–171 (SSSV), 191–194 (SPEH), tyrosine 209, and 244–245 (LD).

This sequence belongs to the zinc-containing alcohol dehydrogenase family.

It functions in the pathway secondary metabolite biosynthesis; terpenoid biosynthesis. In terms of biological role, trans-enoyl reductase; part of the gene cluster that mediates the biosynthesis of talaronoid C, a fusicoccane diterpenoid with an unprecedented tricyclic 5/8/6 ring system. The first step in the pathway is performed by the fusicoccadiene synthase tndC that possesses both prenyl transferase and terpene cyclase activity, converting isopentenyl diphosphate and dimethylallyl diphosphate into geranylgeranyl diphosphate (GGDP) and further converting GGDP into talarodiene, a precursor for talaronoid C. The remaining enzymes from the cluster include the cytochrome P450 monooxygenase tndB, the aldehyde reductase tndE and the alcohol dehydrogenase tndF that are involved in the conversion of talarodiene into talaronoid C. The chain is Trans-enoyl reductase tndF from Aspergillus flavipes.